Here is a 115-residue protein sequence, read N- to C-terminus: NADH-ubiquinone oxidoreductase chain 3 (115 aa).

Transmembrane regions (helical) follow at residues 4 to 24, 55 to 75, and 87 to 107; these read LLVLLVNSILSLLLILIAFWL, FFLVAITFLLFDLEIALLLPL, and MTLTSFILISVLALGLAYEWL.

Belongs to the complex I subunit 3 family. Core subunit of respiratory chain NADH dehydrogenase (Complex I) which is composed of 45 different subunits. Interacts with TMEM186. Interacts with TMEM242.

The protein resides in the mitochondrion inner membrane. It catalyses the reaction a ubiquinone + NADH + 5 H(+)(in) = a ubiquinol + NAD(+) + 4 H(+)(out). Core subunit of the mitochondrial membrane respiratory chain NADH dehydrogenase (Complex I) which catalyzes electron transfer from NADH through the respiratory chain, using ubiquinone as an electron acceptor. Essential for the catalytic activity of complex I. This is NADH-ubiquinone oxidoreductase chain 3 from Peromyscus eremicus (Cactus mouse).